The chain runs to 245 residues: MVFKVLTLFPEVILQATNFSILKRAQEKGLIKIEAINIRDYTKDKHKRTDDYPYGGGFGMVMTAQPIVDAYESIKSSKPHRVIYLTPQGKKYTQDIAKEFSKEEELVIICGHYEGIDQRVIDLIVTDEISIGDYVLSGGEYAALVLIDSISRLVEGVIEKKSVEEESFSECLLEYPHYTRPYEFRGLKVPEVLLSGNHEKIKKWRRYQSLLKTIKSRPDLINAANLTKEDIEFLIKYCESQKIVL.

S-adenosyl-L-methionine is bound by residues Gly111 and 131–136 (IGDYVL).

This sequence belongs to the RNA methyltransferase TrmD family. As to quaternary structure, homodimer.

It localises to the cytoplasm. The enzyme catalyses guanosine(37) in tRNA + S-adenosyl-L-methionine = N(1)-methylguanosine(37) in tRNA + S-adenosyl-L-homocysteine + H(+). Functionally, specifically methylates guanosine-37 in various tRNAs. In Caldicellulosiruptor saccharolyticus (strain ATCC 43494 / DSM 8903 / Tp8T 6331), this protein is tRNA (guanine-N(1)-)-methyltransferase.